The primary structure comprises 72 residues: Osmotically-inducible lipoprotein B (72 aa).

The first 23 residues, 1 to 23 (MFVTSKKMTAAVLAITLAMSLSA), serve as a signal peptide directing secretion. Cys-24 carries the N-palmitoyl cysteine lipid modification. Cys-24 carries the S-diacylglycerol cysteine lipid modification.

It is found in the cell membrane. Functionally, provides resistance to osmotic stress. May be important for stationary-phase survival. The protein is Osmotically-inducible lipoprotein B (osmB) of Escherichia coli O157:H7.